The following is a 401-amino-acid chain: MGRATKVVLAYSGGVDTSVCIPYLKQEWGVEEVITFAADLGQGDELEPIRLKALEAGATQSLVGDLIKPFIEEFAFPAIRANALYEGRYPLSTALARPLIARRLVEVAREVGADAVAHGCTGKGNDQVRFDVAIASLAPDLKVLTPAREWGMSREETIAYGERFGMPSPVSKKSPYSIDLNLLGRSIEAGPLEDPMVAPPEEVFAMTRSVDQTPNDAEEIEIQFEGGNPVAINGKRLEPVSLIREANLLAGTHGIGRLDMIENRVVGIKSREIYETPGLLLLIQAHQELESLTLAADVLRTKRQLEMQWADLVYQGLWFGPLKEALDGFMDRTQIHVNGVVRLKLHKGNATVTGRASTDNSLYIPEMASYGSEDKFDHRAAEGFIYVWGLPTRLWAAKHRR.

ATP contacts are provided by residues 10-18 and A38; that span reads AYSGGVDTS. L-citrulline is bound at residue Y89. ATP is bound at residue G119. 3 residues coordinate L-aspartate: T121, N125, and D126. N125 is a binding site for L-citrulline. Residues R129, S177, S186, E262, and Y274 each contribute to the L-citrulline site.

Belongs to the argininosuccinate synthase family. Type 1 subfamily. Homotetramer.

It localises to the cytoplasm. It carries out the reaction L-citrulline + L-aspartate + ATP = 2-(N(omega)-L-arginino)succinate + AMP + diphosphate + H(+). It participates in amino-acid biosynthesis; L-arginine biosynthesis; L-arginine from L-ornithine and carbamoyl phosphate: step 2/3. The polypeptide is Argininosuccinate synthase (Synechococcus sp. (strain CC9311)).